We begin with the raw amino-acid sequence, 415 residues long: MSRTRTTPGRRVESDVVDIGEHEFESGEILPDLKVAYEAYGEFDGQNAVLVCHGLTGSQHVAGHGTESGVSGQARAWWGDIVGPGKAIDTNDYYVICVNVPGSCYGTSGPASEGPDGEPWGTDFPPVTVHDWTRAQRRLLDHLGVGRLHAVVGGSVGGMNALDWAVQFPDDVERLAVVASAARLDSQCLGIDAVARRAITSDPNWNGGDYYGEERPSPDAGLGLARQLGHLMYLSKDSMERKFGRRSAGRGERGDAFPSDPAASFFPYREVESYLDYQAEKFAERFDANAYLYLTRAMDDFDLSEGYESDAAALAAFEGEALLVSFTGDWHFTTEQSESLAGAFRRGDVPVAHHVVESDHGHDAFLVEPEKVGPPLADFVDEGVAGRAVTDTAPDGGEPDEDEDFAPVHSSLFSR.

One can recognise an AB hydrolase-1 domain in the interval 47-369 (NAVLVCHGLT…HGHDAFLVEP (323 aa)). S155 acts as the Nucleophile in catalysis. R226 provides a ligand contact to substrate. Active-site residues include D329 and H362. D363 serves as a coordination point for substrate. Residues 383–415 (GVAGRAVTDTAPDGGEPDEDEDFAPVHSSLFSR) are disordered.

This sequence belongs to the AB hydrolase superfamily. MetX family. In terms of assembly, homodimer.

The protein resides in the cytoplasm. It carries out the reaction L-homoserine + acetyl-CoA = O-acetyl-L-homoserine + CoA. It participates in amino-acid biosynthesis; L-methionine biosynthesis via de novo pathway; O-acetyl-L-homoserine from L-homoserine: step 1/1. Transfers an acetyl group from acetyl-CoA to L-homoserine, forming acetyl-L-homoserine. The chain is Homoserine O-acetyltransferase from Haloferax volcanii (strain ATCC 29605 / DSM 3757 / JCM 8879 / NBRC 14742 / NCIMB 2012 / VKM B-1768 / DS2) (Halobacterium volcanii).